Reading from the N-terminus, the 584-residue chain is Peroxynitrite isomerase THAP4 (584 aa).

The THAP-type zinc-finger motif lies at 1 to 85 (MVICCAAANC…LKPTAVPSIF (85 aa)). Positions 84-330 (IFHLAEKKRR…EAVQSEHSDA (247 aa)) are disordered. The segment covering 89 to 104 (EKKRRAGGHGRPRRRD) has biased composition (basic residues). The segment covering 122-138 (GKAAAGSPSSSSASPMA) has biased composition (low complexity). The span at 158-178 (AARETAGQERGRQPLEGRAED) shows a compositional bias: basic and acidic residues. The span at 190–208 (GEAGTGAEDAGEEGATPAD) shows a compositional bias: low complexity. An HCFC1-binding motif (HBM) motif is present at residues 236 to 239 (LHSY). Position 240 is a phosphoserine (Ser-240). Residues 248 to 267 (ERPAVPREPVERKRLRRDAE) show a composition bias toward basic and acidic residues. The segment at 422-584 (PPKMSPVVEP…LHVTYKKVTP (163 aa)) is nitrobindin. Residues Thr-451 and His-574 each contribute to the heme b site.

The protein in the C-terminal section; belongs to the nitrobindin family. In terms of assembly, homodimer. It depends on heme b as a cofactor.

It localises to the cytoplasm. Its subcellular location is the nucleus. The enzyme catalyses peroxynitrite = nitrate. It participates in nitrogen metabolism. In terms of biological role, heme-binding protein able to scavenge peroxynitrite and to protect free L-tyrosine against peroxynitrite-mediated nitration, by acting as a peroxynitrite isomerase that converts peroxynitrite to nitrate. Therefore, this protein likely plays a role in peroxynitrite sensing and in the detoxification of reactive nitrogen and oxygen species (RNS and ROS, respectively). Is able to bind nitric oxide (NO) in vitro, but may act as a sensor of peroxynitrite levels in vivo, possibly modulating the transcriptional activity residing in the N-terminal region. The polypeptide is Peroxynitrite isomerase THAP4 (Bos taurus (Bovine)).